The primary structure comprises 567 residues: Glutamine-dependent NAD(+) synthetase (567 aa).

The CN hydrolase domain occupies 2 to 242 (LNLTLAQLNF…EDILTVTLDL (241 aa)). Glu-41 serves as the catalytic Proton acceptor; for glutaminase activity. Residue Lys-109 is the For glutaminase activity of the active site. Tyr-115 contacts L-glutamine. The Nucleophile; for glutaminase activity role is filled by Cys-145. Residues Ser-172 and Lys-178 each contribute to the L-glutamine site. The tract at residues 287–567 (PKEEEEIYAA…RMPVTNKFFK (281 aa)) is ligase. ATP is bound at residue 316–323 (GLSGGIDS). Asn-399 serves as a coordination point for deamido-NAD(+). An ATP-binding site is contributed by Thr-423. Residues Glu-428 and Lys-538 each contribute to the deamido-NAD(+) site.

In the C-terminal section; belongs to the NAD synthetase family.

The catalysed reaction is deamido-NAD(+) + L-glutamine + ATP + H2O = L-glutamate + AMP + diphosphate + NAD(+) + H(+). It participates in cofactor biosynthesis; NAD(+) biosynthesis; NAD(+) from deamido-NAD(+) (L-Gln route): step 1/1. Its function is as follows. Catalyzes the ATP-dependent amidation of deamido-NAD to form NAD. Uses L-glutamine as a nitrogen source. The chain is Glutamine-dependent NAD(+) synthetase from Aquifex aeolicus (strain VF5).